A 161-amino-acid chain; its full sequence is Transcriptional repressor NrdR (161 aa).

Residues 1–11 (MRCPSCSSLDT) are compositionally biased toward polar residues. The tract at residues 1–20 (MRCPSCSSLDTQVKDSRPTE) is disordered. The segment at 3-34 (CPSCSSLDTQVKDSRPTEDSAVIRRRRVCMAC) is a zinc-finger region. Residues 49–139 (LTVIKRNGRR…VYRNFREAKD (91 aa)) form the ATP-cone domain.

It belongs to the NrdR family. The cofactor is Zn(2+).

Its function is as follows. Negatively regulates transcription of bacterial ribonucleotide reductase nrd genes and operons by binding to NrdR-boxes. In Rhodopseudomonas palustris (strain BisB18), this protein is Transcriptional repressor NrdR.